The primary structure comprises 265 residues: Putative pyruvate, phosphate dikinase regulatory protein 2 (265 aa).

ADP is bound at residue 150 to 157 (GVSRTSKT).

The protein belongs to the pyruvate, phosphate/water dikinase regulatory protein family. PDRP subfamily.

The catalysed reaction is N(tele)-phospho-L-histidyl/L-threonyl-[pyruvate, phosphate dikinase] + ADP = N(tele)-phospho-L-histidyl/O-phospho-L-threonyl-[pyruvate, phosphate dikinase] + AMP + H(+). It carries out the reaction N(tele)-phospho-L-histidyl/O-phospho-L-threonyl-[pyruvate, phosphate dikinase] + phosphate + H(+) = N(tele)-phospho-L-histidyl/L-threonyl-[pyruvate, phosphate dikinase] + diphosphate. Bifunctional serine/threonine kinase and phosphorylase involved in the regulation of the pyruvate, phosphate dikinase (PPDK) by catalyzing its phosphorylation/dephosphorylation. This chain is Putative pyruvate, phosphate dikinase regulatory protein 2, found in Latilactobacillus sakei subsp. sakei (strain 23K) (Lactobacillus sakei subsp. sakei).